Here is a 608-residue protein sequence, read N- to C-terminus: UvrABC system protein C (608 aa).

Residues N18 to V96 enclose the GIY-YIG domain. In terms of domain architecture, UVR spans K206 to V241.

The protein belongs to the UvrC family. In terms of assembly, interacts with UvrB in an incision complex.

The protein localises to the cytoplasm. Functionally, the UvrABC repair system catalyzes the recognition and processing of DNA lesions. UvrC both incises the 5' and 3' sides of the lesion. The N-terminal half is responsible for the 3' incision and the C-terminal half is responsible for the 5' incision. The sequence is that of UvrABC system protein C from Pseudoalteromonas atlantica (strain T6c / ATCC BAA-1087).